We begin with the raw amino-acid sequence, 418 residues long: Putative ion-transport protein YfeO (418 aa).

A run of 12 helical transmembrane segments spans residues 10–30, 54–74, 99–119, 120–140, 149–169, 186–206, 223–243, 258–278, 300–320, 322–342, 343–363, and 371–391; these read LLLSLPAVAIGIASSLILIVV, DSPFWIIAILTLTGIAVGLVI, ALPGLIVALILGLAGGVSLGP, EHPIMTVNIALAVAIGARLLP, ILASAGTIGALFGTPVAAALI, LFAPLMAAAAGALTTGLFFHP, ILSGAIVAAIAIAAGMIAVWC, VLMLGVGGFILGILGVIAGPV, DYFLLAVIKLAALVVAAASGF, GGRIFPAVFVGVALGLMLHEH, VPAVPAAITVSCAILGIVLVV, and LFMAAVVVPNTTLLPLLCIVM.

This sequence belongs to the chloride channel (TC 2.A.49) family.

It localises to the cell membrane. The chain is Putative ion-transport protein YfeO from Escherichia coli O7:K1 (strain IAI39 / ExPEC).